Here is a 704-residue protein sequence, read N- to C-terminus: MIHDPAEPPAAAAEPPLDTASPDGAAPVADTRPAAGNQDIDAATASLAVEEDDEARLPEVEDEPEAEPAQAGAGPMAVGRSAIARAVRLAPTSPGVYRMLNAERDVLYVGKAKNVKKRLASYARPTGQVLRIARMIALTVEVEVISTTTETEALLLEANLIKQLRPRFNVQLRDDKSFPYILITSDHWAPQILKHRGAQSRPGRYFGPFASAGAVNRTITALQRAFLVRSCTDSFFESRTRPCLLYQIRRCAGPCTGEVDFPGYSELVREATDFLSGRSRAVKELLAAEMEKASGELEFETAALYRDRLAALSAIQSQQGINPRTVEEADVFAIHQDGGYSCVEVFFFRTGQNWGNRAYFPRAEKSFTPAEVLGAFVAQFYDDKPPPKLILLSHEIEEAELLADALCVKAGHKVEITVPKRGEKKELVAHAQTNAREALGRKLADTATQARLLENLATTLGLPKTPQRIEVYDNSHIQGTNAVGAMIVAGPDGFIKNQYRKFNIRSEGLTPGDDYAMMREVLQRRFKRLVTSQAEGDGEAAAKAKPKDDDVPQWPDLVIIDGGRGQLNAAREALSGIGLTDQVTLLGVAKGPDRDAGRETLFLPDRDAIKLEPRDPVLYFIQRLRDEAHRFVIGSHRTLRKKDIREAGLQEIPGIGPTRKRALLLHFGTLKEIERASIADLGKVPGISAESAKRIFEFFHARPD.

The disordered stretch occupies residues 1 to 77 (MIHDPAEPPA…PAQAGAGPMA (77 aa)). A compositionally biased stretch (acidic residues) spans 49-66 (VEEDDEARLPEVEDEPEA). Over residues 67 to 77 (EPAQAGAGPMA) the composition is skewed to low complexity. In terms of domain architecture, GIY-YIG spans 92 to 170 (TSPGVYRMLN…IKQLRPRFNV (79 aa)). One can recognise a UVR domain in the interval 280–315 (RAVKELLAAEMEKASGELEFETAALYRDRLAALSAI).

The protein belongs to the UvrC family. In terms of assembly, interacts with UvrB in an incision complex.

Its subcellular location is the cytoplasm. Functionally, the UvrABC repair system catalyzes the recognition and processing of DNA lesions. UvrC both incises the 5' and 3' sides of the lesion. The N-terminal half is responsible for the 3' incision and the C-terminal half is responsible for the 5' incision. The polypeptide is UvrABC system protein C (Rhodopseudomonas palustris (strain ATCC BAA-98 / CGA009)).